The sequence spans 574 residues: Transmembrane protein 108 (574 aa).

A helical transmembrane segment spans residues Tyr-9–Val-29. The interval Glu-31–Pro-169 is interaction with SH3GL2. Disordered regions lie at residues Pro-32–Phe-352 and Asp-364–Leu-417. Residues Thr-58–Ser-86 show a composition bias toward polar residues. Residues Leu-132 to Ala-160 are compositionally biased toward low complexity. The interaction with DST (isoform 1) stretch occupies residues Arg-173–Ser-406. Over residues Phe-245–Leu-271 the composition is skewed to polar residues. The span at Thr-292 to Pro-312 shows a compositional bias: low complexity. Residues Pro-316–Asp-332 show a composition bias toward polar residues. A helical membrane pass occupies residues Ile-468 to Val-488. The interval Cys-489–Ile-574 is interaction with CYFIP2.

In terms of assembly, interacts with DST (isoform 1). Interacts with SH3GL2. Interacts (via N-terminus) with CYFIP1 and CYFIP2; the interactions associate TMEM108 with the WAVE1 complex. Glycosylated. Expressed in the nervous system tissues, such as hippocampus and spinal cord, is barely detectable in peripheral tissues such as heart, lung, liver, kidney and muscle. In brain, highly expressed in dentate gyrus neurons and expressed in cortex, olfactory bulb, ammon's horn, cerebellum, hypothalamus and striatum.

The protein localises to the membrane. Its subcellular location is the postsynaptic density. It is found in the endosome membrane. The protein resides in the cell projection. It localises to the axon. The protein localises to the dendrite. Its subcellular location is the early endosome. In terms of biological role, transmembrane protein required for proper cognitive functions. Involved in the development of dentate gyrus (DG) neuron circuitry, is necessary for AMPA receptors surface expression and proper excitatory postsynaptic currents of DG granule neurons. Regulates the organization and stability of the microtubule network of sensory neurons to allow axonal transport. Through the interaction with DST, mediates the docking of the dynein/dynactin motor complex to vesicle cargos for retrograde axonal transport. In hippocampal neurons, required for BDNF-dependent dendrite outgrowth. Cooperates with SH3GL2 and recruits the WAVE1 complex to facilitate actin-dependent BDNF:NTRK2 early endocytic trafficking and mediate signaling from early endosomes. The polypeptide is Transmembrane protein 108 (Mus musculus (Mouse)).